Consider the following 376-residue polypeptide: Multiphosphoryl transfer protein (376 aa).

Residues 2-142 form the PTS EIIA type-2 domain; the sequence is FQLSVQDIHP…EELRALLMGE (141 aa). Catalysis depends on histidine 62, which acts as the Tele-phosphohistidine intermediate; for EIIA activity. Residue histidine 62 is modified to Phosphohistidine; by HPr. The interval 156–284 is m domain; the sequence is TLDVIASSLV…LTSDDALTDD (129 aa). One can recognise an HPr domain in the interval 285–375; that stretch reads VLSAEFVVRN…DAIAAGLGEG (91 aa). Histidine 299 serves as the catalytic Pros-phosphohistidine intermediate; for HPr activity. A Phosphohistidine; by EI modification is found at histidine 299.

It localises to the cytoplasm. In terms of biological role, the phosphoenolpyruvate-dependent sugar phosphotransferase system (sugar PTS), a major carbohydrate active transport system, catalyzes the phosphorylation of incoming sugar substrates concomitantly with their translocation across the cell membrane. The enzyme II FruAB PTS system is involved in fructose transport. This is Multiphosphoryl transfer protein (fruB) from Salmonella typhimurium (strain LT2 / SGSC1412 / ATCC 700720).